A 376-amino-acid polypeptide reads, in one-letter code: Probable allantoicase (376 aa).

Belongs to the allantoicase family.

It catalyses the reaction allantoate + H2O = (S)-ureidoglycolate + urea. It functions in the pathway nitrogen metabolism; (S)-allantoin degradation; (S)-ureidoglycolate from allantoate (aminidohydrolase route): step 1/1. The sequence is that of Probable allantoicase from Streptomyces avermitilis (strain ATCC 31267 / DSM 46492 / JCM 5070 / NBRC 14893 / NCIMB 12804 / NRRL 8165 / MA-4680).